The sequence spans 595 residues: Tectonic-3 (595 aa).

The signal sequence occupies residues 1–22 (MCTLQLHLLLLVVLMLSETARP). A disordered region spans residues 23 to 62 (QPSSTARAFPTSWGLEPVTPEVPTSAPPDSSESPTPWTLS). At 23–575 (QPSSTARAFP…ALSRGASVQK (553 aa)) the chain is on the extracellular side. Over residues 49 to 62 (PPDSSESPTPWTLS) the composition is skewed to polar residues. N-linked (GlcNAc...) asparagine glycosylation is found at Asn167 and Asn336. A helical membrane pass occupies residues 576 to 594 (DSLVLILCVLLLGLLNSQT). Residue Lys595 is a topological domain, cytoplasmic.

It belongs to the tectonic family. As to quaternary structure, part of the tectonic-like complex (also named B9 complex).

It localises to the membrane. Functionally, part of the tectonic-like complex which is required for tissue-specific ciliogenesis and may regulate ciliary membrane composition. May be involved in apoptosis regulation. Necessary for signal transduction through the sonic hedgehog (Shh) signaling pathway. In Mus musculus (Mouse), this protein is Tectonic-3 (Tctn3).